We begin with the raw amino-acid sequence, 130 residues long: Small ribosomal subunit protein uS8 (130 aa).

The protein belongs to the universal ribosomal protein uS8 family. In terms of assembly, part of the 30S ribosomal subunit. Contacts proteins S5 and S12.

One of the primary rRNA binding proteins, it binds directly to 16S rRNA central domain where it helps coordinate assembly of the platform of the 30S subunit. The polypeptide is Small ribosomal subunit protein uS8 (Vibrio atlanticus (strain LGP32) (Vibrio splendidus (strain Mel32))).